Consider the following 327-residue polypeptide: tRNA dimethylallyltransferase (327 aa).

14–21 (GPTASGKT) serves as a coordination point for ATP. 16–21 (TASGKT) is a substrate binding site. Interaction with substrate tRNA regions lie at residues 39–42 (DSAL) and 163–167 (QRIQR).

It belongs to the IPP transferase family. As to quaternary structure, monomer. The cofactor is Mg(2+).

The enzyme catalyses adenosine(37) in tRNA + dimethylallyl diphosphate = N(6)-dimethylallyladenosine(37) in tRNA + diphosphate. In terms of biological role, catalyzes the transfer of a dimethylallyl group onto the adenine at position 37 in tRNAs that read codons beginning with uridine, leading to the formation of N6-(dimethylallyl)adenosine (i(6)A). This is tRNA dimethylallyltransferase from Xanthomonas euvesicatoria pv. vesicatoria (strain 85-10) (Xanthomonas campestris pv. vesicatoria).